A 360-amino-acid chain; its full sequence is Histidinol-phosphate aminotransferase (360 aa).

N6-(pyridoxal phosphate)lysine is present on K223.

Belongs to the class-II pyridoxal-phosphate-dependent aminotransferase family. Histidinol-phosphate aminotransferase subfamily. In terms of assembly, homodimer. The cofactor is pyridoxal 5'-phosphate.

It carries out the reaction L-histidinol phosphate + 2-oxoglutarate = 3-(imidazol-4-yl)-2-oxopropyl phosphate + L-glutamate. The protein operates within amino-acid biosynthesis; L-histidine biosynthesis; L-histidine from 5-phospho-alpha-D-ribose 1-diphosphate: step 7/9. In Bacillus velezensis (strain DSM 23117 / BGSC 10A6 / LMG 26770 / FZB42) (Bacillus amyloliquefaciens subsp. plantarum), this protein is Histidinol-phosphate aminotransferase.